A 371-amino-acid chain; its full sequence is E3 ubiquitin-protein ligase RHF1A (371 aa).

An RING-type; atypical zinc finger spans residues 46-87; sequence CSICLEPFTLQDPSTVTSCKHEYHLQCIIEWSQRSKECPICW. 2 disordered regions span residues 199 to 254 and 348 to 371; these read HQNS…SSLP and EANS…GETC. The segment covering 200–225 has biased composition (polar residues); that stretch reads QNSNPCPSPGSMTPSPVSGHSSIPAD. Positions 226-252 are enriched in low complexity; sequence SNNGSRISPGPSPSRSSQSPKSPEASS.

Interacts with KRP6. Expressed in stems, flowers, green siliques, cauline leaves, seeds and roots.

It catalyses the reaction S-ubiquitinyl-[E2 ubiquitin-conjugating enzyme]-L-cysteine + [acceptor protein]-L-lysine = [E2 ubiquitin-conjugating enzyme]-L-cysteine + N(6)-ubiquitinyl-[acceptor protein]-L-lysine.. The protein operates within protein modification; protein ubiquitination. Its function is as follows. E3 ubiquitin-protein ligase involved in the positive regulation of the gametogenesis progression. Mediates the proteasomal degradation of KRP6, a cyclin-dependent kinase inhibitor which accumulates during meiosis and blocks the progression of subsequent mitoses during gametophyte development. Functions in association with RHF2A. Possesses E3 ubiquitin-protein ligase activity when associated with the E2 enzyme UBC8 in vitro. The chain is E3 ubiquitin-protein ligase RHF1A from Arabidopsis thaliana (Mouse-ear cress).